Here is a 244-residue protein sequence, read N- to C-terminus: 3-oxoacyl-[acyl-carrier-protein] reductase FabG (244 aa).

NADP(+) contacts are provided by residues 12-15 (GASR) and Thr-37. 2 residues coordinate Ca(2+): Gly-50 and Gly-53. NADP(+) is bound by residues 59–60 (NV) and Asn-86. Ser-138 contacts substrate. Asn-145 provides a ligand contact to Ca(2+). The active-site Proton acceptor is the Tyr-151. Residues 151 to 155 (YAAAK) and Ile-184 contribute to the NADP(+) site. Residues Glu-233 and Thr-234 each contribute to the Ca(2+) site.

The protein belongs to the short-chain dehydrogenases/reductases (SDR) family. As to quaternary structure, homotetramer.

The catalysed reaction is a (3R)-hydroxyacyl-[ACP] + NADP(+) = a 3-oxoacyl-[ACP] + NADPH + H(+). It carries out the reaction 3-oxobutanoyl-[ACP] + NADPH + H(+) = (3R)-hydroxybutanoyl-[ACP] + NADP(+). It catalyses the reaction 3-oxopentanoyl-[ACP] + NADPH + H(+) = (3R)-hydroxypentanoyl-[ACP] + NADP(+). The enzyme catalyses 3-oxohexanoyl-[ACP] + NADPH + H(+) = (3R)-hydroxyhexanoyl-[ACP] + NADP(+). The catalysed reaction is 3-oxoheptanoyl-[ACP] + NADPH + H(+) = (3R)-hydroxyheptanoyl-[ACP] + NADP(+). It carries out the reaction 3-oxooctanoyl-[ACP] + NADPH + H(+) = (3R)-hydroxyoctanoyl-[ACP] + NADP(+). It catalyses the reaction 3-oxononanoyl-[ACP] + NADPH + H(+) = (3R)-hydroxynonanoyl-[ACP] + NADP(+). The enzyme catalyses 3-oxodecanoyl-[ACP] + NADPH + H(+) = (3R)-hydroxydecanoyl-[ACP] + NADP(+). The catalysed reaction is 3-oxohexadecanoyl-[ACP] + NADPH + H(+) = (3R)-hydroxyhexadecanoyl-[ACP] + NADP(+). It carries out the reaction 3-oxo-(9Z)-hexadecenoyl-[ACP] + NADPH + H(+) = (3R)-hydroxy-(9Z)-hexadecenoyl-[ACP] + NADP(+). It catalyses the reaction 4-methyl-3-oxopentanoyl-[ACP] + NADPH + H(+) = (3R)-hydroxy-4-methylpentanoyl-[ACP] + NADP(+). The enzyme catalyses 5-methyl-3-oxohexanoyl-[ACP] + NADPH + H(+) = (3R)-hydroxy-5-methylhexanoyl-[ACP] + NADP(+). The catalysed reaction is 4-methyl-3-oxohexanoyl-[ACP] + NADPH + H(+) = (3R)-hydroxy-4-methylhexanoyl-[ACP] + NADP(+). It participates in lipid metabolism; fatty acid biosynthesis. With respect to regulation, inhibited by cinnamic acid derivatives. In terms of biological role, catalyzes the NADPH-dependent reduction of beta-ketoacyl-ACP substrates to beta-hydroxyacyl-ACP products, the first reductive step in the elongation cycle of fatty acid biosynthesis. This chain is 3-oxoacyl-[acyl-carrier-protein] reductase FabG (fabG), found in Escherichia coli (strain K12).